The chain runs to 538 residues: uncharacterized protein (538 aa).

Residues 1-17 (MNLQILLLLLLFCHVAA) form the signal peptide. Asn-115 is a glycosylation site (N-linked (GlcNAc...) asparagine).

This is an uncharacterized protein from Caenorhabditis elegans.